We begin with the raw amino-acid sequence, 115 residues long: Large ribosomal subunit protein uL24 (115 aa).

It belongs to the universal ribosomal protein uL24 family. Part of the 50S ribosomal subunit.

In terms of biological role, one of two assembly initiator proteins, it binds directly to the 5'-end of the 23S rRNA, where it nucleates assembly of the 50S subunit. Its function is as follows. One of the proteins that surrounds the polypeptide exit tunnel on the outside of the subunit. This Aster yellows witches'-broom phytoplasma (strain AYWB) protein is Large ribosomal subunit protein uL24.